We begin with the raw amino-acid sequence, 252 residues long: Ribosomal RNA small subunit methyltransferase J (252 aa).

S-adenosyl-L-methionine-binding positions include 104-105 (RD), 120-121 (ER), and aspartate 174.

Belongs to the methyltransferase superfamily. RsmJ family.

Its subcellular location is the cytoplasm. The catalysed reaction is guanosine(1516) in 16S rRNA + S-adenosyl-L-methionine = N(2)-methylguanosine(1516) in 16S rRNA + S-adenosyl-L-homocysteine + H(+). Functionally, specifically methylates the guanosine in position 1516 of 16S rRNA. The polypeptide is Ribosomal RNA small subunit methyltransferase J (Mannheimia succiniciproducens (strain KCTC 0769BP / MBEL55E)).